A 727-amino-acid chain; its full sequence is DNA topoisomerase 3 (727 aa).

One can recognise a Toprim domain in the interval 3–136; sequence KTVVLAEKPS…IKRLWISSVT (134 aa). Mg(2+)-binding residues include Glu-9 and Asp-105. A Topo IA-type catalytic domain is found at 153–593; the sequence is YENLYHSAVA…DMKAYAHQTV (441 aa). The segment at 187 to 192 is interaction with DNA; that stretch reads SCGRVQ. Catalysis depends on Tyr-310, which acts as the O-(5'-phospho-DNA)-tyrosine intermediate. Over residues 685 to 699 the composition is skewed to basic and acidic residues; sequence KRKNKDKARATKRDV. The interval 685 to 714 is disordered; that stretch reads KRKNKDKARATKRDVSSYMKKQNKDEPINN.

This sequence belongs to the type IA topoisomerase family. Mg(2+) serves as cofactor.

It carries out the reaction ATP-independent breakage of single-stranded DNA, followed by passage and rejoining.. Functionally, releases the supercoiling and torsional tension of DNA, which is introduced during the DNA replication and transcription, by transiently cleaving and rejoining one strand of the DNA duplex. Introduces a single-strand break via transesterification at a target site in duplex DNA. The scissile phosphodiester is attacked by the catalytic tyrosine of the enzyme, resulting in the formation of a DNA-(5'-phosphotyrosyl)-enzyme intermediate and the expulsion of a 3'-OH DNA strand. The free DNA strand then undergoes passage around the unbroken strand, thus removing DNA supercoils. Finally, in the religation step, the DNA 3'-OH attacks the covalent intermediate to expel the active-site tyrosine and restore the DNA phosphodiester backbone. In Bacillus subtilis (strain 168), this protein is DNA topoisomerase 3.